Here is a 505-residue protein sequence, read N- to C-terminus: Flagellin (505 aa).

This sequence belongs to the bacterial flagellin family.

It is found in the secreted. Its subcellular location is the bacterial flagellum. Its function is as follows. Flagellin is the subunit protein which polymerizes to form the filaments of bacterial flagella. The protein is Flagellin (fliC) of Salmonella moscow.